Consider the following 73-residue polypeptide: DNA-binding protein S1FA3 (73 aa).

Positions 47 to 52 (PPRKKK) match the Nuclear localization signal motif. The segment covering 47-63 (PPRKKKPVSKKKMKKEK) has biased composition (basic residues). Residues 47 to 73 (PPRKKKPVSKKKMKKEKMKQGVQVPGE) are disordered.

It belongs to the S1FA transcription factor family.

It localises to the nucleus. DNA-binding protein that specifically recognizes a negative element (S1F) within the RPS1 promoter. The chain is DNA-binding protein S1FA3 (S1FA3) from Arabidopsis thaliana (Mouse-ear cress).